Reading from the N-terminus, the 235-residue chain is MKLLYEGKAKRIYETQNPNEVICEFKDSLTAFNGEKADEESGKGALNCAITTLIFEALEKEGIPTHLIKQIDETKQLVKKVDIILIEVVVRNIVAGSLAKRLGLKEGTKLPFTIVEFYYKNDDLNDPLINDDHAMVLELVKTRKELDLLREYGLKVNKFLSEFFDKVGLTLVDFKIEFGRDENGNIILADEITPDSCRLWDKKTGKKLDKDLFRFNLGNIKEAYTEVLNRLKDVK.

This sequence belongs to the SAICAR synthetase family.

It catalyses the reaction 5-amino-1-(5-phospho-D-ribosyl)imidazole-4-carboxylate + L-aspartate + ATP = (2S)-2-[5-amino-1-(5-phospho-beta-D-ribosyl)imidazole-4-carboxamido]succinate + ADP + phosphate + 2 H(+). It functions in the pathway purine metabolism; IMP biosynthesis via de novo pathway; 5-amino-1-(5-phospho-D-ribosyl)imidazole-4-carboxamide from 5-amino-1-(5-phospho-D-ribosyl)imidazole-4-carboxylate: step 1/2. The sequence is that of Phosphoribosylaminoimidazole-succinocarboxamide synthase from Nautilia profundicola (strain ATCC BAA-1463 / DSM 18972 / AmH).